The following is a 349-amino-acid chain: Hydroxymethylglutaryl-CoA synthase (349 aa).

Positions 30 and 31 each coordinate (3S)-3-hydroxy-3-methylglutaryl-CoA. The active-site Proton donor/acceptor is the E82. 2 residues coordinate (3S)-3-hydroxy-3-methylglutaryl-CoA: C114 and T155. The active-site Acyl-thioester intermediate is C114. CoA is bound at residue R203. The (3S)-3-hydroxy-3-methylglutaryl-CoA site is built by T205 and H238. Catalysis depends on H238, which acts as the Proton donor/acceptor. K243 is a binding site for CoA. (3S)-3-hydroxy-3-methylglutaryl-CoA-binding residues include N270 and S300.

This sequence belongs to the thiolase-like superfamily. Archaeal HMG-CoA synthase family. As to quaternary structure, interacts with acetoacetyl-CoA thiolase that catalyzes the precedent step in the pathway and with a DUF35 protein. The acetoacetyl-CoA thiolase/HMG-CoA synthase complex channels the intermediate via a fused CoA-binding site, which allows for efficient coupling of the endergonic thiolase reaction with the exergonic HMGCS reaction.

The catalysed reaction is acetoacetyl-CoA + acetyl-CoA + H2O = (3S)-3-hydroxy-3-methylglutaryl-CoA + CoA + H(+). Its pathway is metabolic intermediate biosynthesis; (R)-mevalonate biosynthesis; (R)-mevalonate from acetyl-CoA: step 2/3. Functionally, catalyzes the condensation of acetyl-CoA with acetoacetyl-CoA to form 3-hydroxy-3-methylglutaryl-CoA (HMG-CoA). Functions in the mevalonate (MVA) pathway leading to isopentenyl diphosphate (IPP), a key precursor for the biosynthesis of isoprenoid compounds that are building blocks of archaeal membrane lipids. In Methanococcus maripaludis (strain C5 / ATCC BAA-1333), this protein is Hydroxymethylglutaryl-CoA synthase.